A 478-amino-acid polypeptide reads, in one-letter code: Alpha-1,3-mannosyl-glycoprotein 4-beta-N-acetylglucosaminyltransferase C (478 aa).

Residues 1–25 (MLKFYQMKYIFQILDKMRCLRKRST) are Cytoplasmic-facing. Residues 26-43 (VSFLGVLVVFLLFMNLYI) form a helical; Signal-anchor for type II membrane protein membrane-spanning segment. Residues 44 to 478 (EDSYVLEGDK…IIRSISIWTS (435 aa)) are Lumenal-facing. Residues asparagine 84 and asparagine 215 are each glycosylated (N-linked (GlcNAc...) asparagine).

This sequence belongs to the glycosyltransferase 54 family. It depends on a divalent metal cation as a cofactor.

Its subcellular location is the golgi apparatus membrane. The enzyme catalyses N(4)-{beta-D-GlcNAc-(1-&gt;2)-alpha-D-Man-(1-&gt;3)-[beta-D-GlcNAc-(1-&gt;2)-alpha-D-Man-(1-&gt;6)]-beta-D-Man-(1-&gt;4)-beta-D-GlcNAc-(1-&gt;4)-beta-D-GlcNAc}-L-asparaginyl-[protein] + UDP-N-acetyl-alpha-D-glucosamine = N(4)-{beta-D-GlcNAc-(1-&gt;2)-[beta-D-GlcNAc-(1-&gt;4)]-alpha-D-Man-(1-&gt;3)-[beta-D-GlcNAc-(1-&gt;2)-alpha-D-Man-(1-&gt;6)]-beta-D-Man-(1-&gt;4)-beta-D-GlcNAc-(1-&gt;4)-beta-D-GlcNAc}-L-asparaginyl-[protein] + UDP + H(+). It participates in protein modification; protein glycosylation. In terms of biological role, glycosyltransferase that participates in the transfer of N-acetylglucosamine (GlcNAc) to the core mannose residues of N-linked glycans. Catalyzes the formation of the GlcNAcbeta1-4 branch on the GlcNAcbeta1-2Manalpha1-3 arm of the core structure of N-linked glycans. Essential for the production of tri- and tetra-antennary N-linked sugar chains. Does not catalyze the transfer of GlcNAc to the Manalpha1-6 arm to form GlcNAcBeta1-4Manalpha1-6 linkage ('GnT-VI' activity). In Mus musculus (Mouse), this protein is Alpha-1,3-mannosyl-glycoprotein 4-beta-N-acetylglucosaminyltransferase C (Mgat4c).